We begin with the raw amino-acid sequence, 529 residues long: T-complex protein 1 subunit delta (529 aa).

This sequence belongs to the TCP-1 chaperonin family. In terms of assembly, heterooligomeric complex of about 850 to 900 kDa that forms two stacked rings, 12 to 16 nm in diameter.

The protein localises to the cytoplasm. Its function is as follows. Molecular chaperone; assists the folding of proteins upon ATP hydrolysis. Known to play a role, in vitro, in the folding of actin and tubulin. The chain is T-complex protein 1 subunit delta (CCT4) from Candida glabrata (strain ATCC 2001 / BCRC 20586 / JCM 3761 / NBRC 0622 / NRRL Y-65 / CBS 138) (Yeast).